Here is a 498-residue protein sequence, read N- to C-terminus: Protein flp (498 aa).

Helical transmembrane passes span 6–26 (LYFL…IYIT), 389–409 (FNIV…FSAY), 433–453 (LTLC…YLIL), and 471–491 (LALI…LLFL).

Its subcellular location is the cell membrane. Functionally, its precise function is unknown. Has no penicillin-binding activity and is not involved in methicillin resistance. The polypeptide is Protein flp (flp) (Staphylococcus aureus (strain Mu50 / ATCC 700699)).